The sequence spans 391 residues: Elongation factor Tu (391 aa).

In terms of domain architecture, tr-type G spans 10 to 201 (KPHVNIGTVG…AVDEYIPTPE (192 aa)). A G1 region spans residues 19–26 (GHVDHGKT). 19–26 (GHVDHGKT) lines the GTP pocket. Residue Thr-26 participates in Mg(2+) binding. The interval 55 to 59 (GITIS) is G2. The tract at residues 76-79 (DCPG) is G3. Residues 76-80 (DCPGH) and 131-134 (NKVD) contribute to the GTP site. Residues 131–134 (NKVD) are G4. Residues 169–171 (SAL) form a G5 region.

The protein belongs to the TRAFAC class translation factor GTPase superfamily. Classic translation factor GTPase family. EF-Tu/EF-1A subfamily. In terms of assembly, monomer.

It is found in the cytoplasm. The catalysed reaction is GTP + H2O = GDP + phosphate + H(+). In terms of biological role, GTP hydrolase that promotes the GTP-dependent binding of aminoacyl-tRNA to the A-site of ribosomes during protein biosynthesis. This chain is Elongation factor Tu, found in Ruegeria sp. (strain TM1040) (Silicibacter sp.).